Here is a 496-residue protein sequence, read N- to C-terminus: Cytochrome P450 71AV8 (496 aa).

A helical transmembrane segment spans residues 3 to 23 (ISIPTTLGLAVIIFIIFKLLT). C432 contacts heme.

This sequence belongs to the cytochrome P450 family. Heme serves as cofactor.

It is found in the membrane. In terms of biological role, valencene oxidase, which preferentially hydroylates the C2 position of (+)-valencene in the trans-orientation, producing trans-nootkatol that can be further oxidized to (+)-nootkatone. Can also catalyze the three-step conversion of germacrene A to germacra-1(10),4,11(13)-trien-12-oic acid and the partial conversion of the non-natural substrate amorpha-4,11-diene into artemisinic alcohol and artemisinic aldehyde. The protein is Cytochrome P450 71AV8 (CYP71AV8) of Cichorium intybus (Chicory).